The following is a 234-amino-acid chain: Sugar fermentation stimulation protein A (234 aa).

Residues Leu-201–Ser-220 constitute a DNA-binding region (H-T-H motif).

It belongs to the SfsA family.

Its function is as follows. Binds to DNA non-specifically. Could be a regulatory factor involved in maltose metabolism. In Escherichia fergusonii (strain ATCC 35469 / DSM 13698 / CCUG 18766 / IAM 14443 / JCM 21226 / LMG 7866 / NBRC 102419 / NCTC 12128 / CDC 0568-73), this protein is Sugar fermentation stimulation protein A.